A 413-amino-acid chain; its full sequence is Serine hydroxymethyltransferase (413 aa).

Residues Leu-115 and 119–121 (GHL) each bind (6S)-5,6,7,8-tetrahydrofolate. An N6-(pyridoxal phosphate)lysine modification is found at Lys-224.

This sequence belongs to the SHMT family. As to quaternary structure, homodimer. Requires pyridoxal 5'-phosphate as cofactor.

It is found in the cytoplasm. It carries out the reaction (6R)-5,10-methylene-5,6,7,8-tetrahydrofolate + glycine + H2O = (6S)-5,6,7,8-tetrahydrofolate + L-serine. Its pathway is one-carbon metabolism; tetrahydrofolate interconversion. The protein operates within amino-acid biosynthesis; glycine biosynthesis; glycine from L-serine: step 1/1. Functionally, catalyzes the reversible interconversion of serine and glycine with tetrahydrofolate (THF) serving as the one-carbon carrier. This reaction serves as the major source of one-carbon groups required for the biosynthesis of purines, thymidylate, methionine, and other important biomolecules. Also exhibits THF-independent aldolase activity toward beta-hydroxyamino acids, producing glycine and aldehydes, via a retro-aldol mechanism. The sequence is that of Serine hydroxymethyltransferase from Mycoplasma mycoides subsp. mycoides SC (strain CCUG 32753 / NCTC 10114 / PG1).